The chain runs to 259 residues: Sugar fermentation stimulation protein homolog (259 aa).

Belongs to the SfsA family.

The protein is Sugar fermentation stimulation protein homolog of Prochlorococcus marinus (strain MIT 9303).